The chain runs to 520 residues: Nuclear GTP-binding protein NUG1 (520 aa).

2 stretches are compositionally biased toward basic residues: residues 1-13 (MRVR…RTST) and 21-34 (KKAS…KKMA). The disordered stretch occupies residues 1-53 (MRVRKRQSRRTSTKLKEGIKKKASAHRKKEKKMAKKDVTWRSRSKKDPGIPSN). A compositionally biased stretch (basic and acidic residues) spans 35-48 (KKDVTWRSRSKKDP). A CP-type G domain is found at 165–343 (YDKIFKSVID…ILDSPGICFP (179 aa)). Residues 213–216 (NKVD), 287–294 (GYPNVGKS), and 336–339 (DSPG) each bind GTP. The residue at position 337 (Ser337) is a Phosphoserine.

Belongs to the TRAFAC class YlqF/YawG GTPase family.

The protein localises to the nucleus. GTPase required for 60S ribosomal subunit export to the cytoplasm. This Saccharomyces cerevisiae (strain ATCC 204508 / S288c) (Baker's yeast) protein is Nuclear GTP-binding protein NUG1 (NUG1).